Consider the following 347-residue polypeptide: Dihydroorotase (347 aa).

Zn(2+)-binding residues include histidine 14 and histidine 16. Substrate contacts are provided by residues 16-18 (HLR) and asparagine 42. Zn(2+) contacts are provided by lysine 100, histidine 137, and histidine 175. Lysine 100 carries the post-translational modification N6-carboxylysine. Histidine 137 lines the substrate pocket. Position 220 (leucine 220) interacts with substrate. Aspartate 248 is a Zn(2+) binding site. Aspartate 248 is an active-site residue. Positions 252 and 264 each coordinate substrate.

This sequence belongs to the metallo-dependent hydrolases superfamily. DHOase family. Class II DHOase subfamily. Homodimer. Requires Zn(2+) as cofactor.

The enzyme catalyses (S)-dihydroorotate + H2O = N-carbamoyl-L-aspartate + H(+). It functions in the pathway pyrimidine metabolism; UMP biosynthesis via de novo pathway; (S)-dihydroorotate from bicarbonate: step 3/3. Functionally, catalyzes the reversible cyclization of carbamoyl aspartate to dihydroorotate. This Pseudomonas syringae pv. syringae (strain B728a) protein is Dihydroorotase.